The chain runs to 738 residues: 1,4-alpha-glucan branching enzyme GlgB (738 aa).

The active-site Nucleophile is the D417. E472 functions as the Proton donor in the catalytic mechanism.

Belongs to the glycosyl hydrolase 13 family. GlgB subfamily. As to quaternary structure, monomer.

The catalysed reaction is Transfers a segment of a (1-&gt;4)-alpha-D-glucan chain to a primary hydroxy group in a similar glucan chain.. Its pathway is glycan biosynthesis; glycogen biosynthesis. In terms of biological role, catalyzes the formation of the alpha-1,6-glucosidic linkages in glycogen by scission of a 1,4-alpha-linked oligosaccharide from growing alpha-1,4-glucan chains and the subsequent attachment of the oligosaccharide to the alpha-1,6 position. This chain is 1,4-alpha-glucan branching enzyme GlgB, found in Burkholderia pseudomallei (strain 668).